The chain runs to 240 residues: Ubiquinone biosynthesis O-methyltransferase (240 aa).

S-adenosyl-L-methionine contacts are provided by Arg-36, Gly-60, Asp-81, and Leu-123.

The protein belongs to the methyltransferase superfamily. UbiG/COQ3 family.

The catalysed reaction is a 3-demethylubiquinol + S-adenosyl-L-methionine = a ubiquinol + S-adenosyl-L-homocysteine + H(+). The enzyme catalyses a 3-(all-trans-polyprenyl)benzene-1,2-diol + S-adenosyl-L-methionine = a 2-methoxy-6-(all-trans-polyprenyl)phenol + S-adenosyl-L-homocysteine + H(+). It participates in cofactor biosynthesis; ubiquinone biosynthesis. O-methyltransferase that catalyzes the 2 O-methylation steps in the ubiquinone biosynthetic pathway. The chain is Ubiquinone biosynthesis O-methyltransferase from Rickettsia bellii (strain OSU 85-389).